The following is a 199-amino-acid chain: Holliday junction branch migration complex subunit RuvA (199 aa).

The segment at Met1–Ser63 is domain I. Residues Asp64–Ala142 are domain II. The tract at residues Ala143–Val150 is flexible linker. The domain III stretch occupies residues Val150–Lys199.

It belongs to the RuvA family. As to quaternary structure, homotetramer. Forms an RuvA(8)-RuvB(12)-Holliday junction (HJ) complex. HJ DNA is sandwiched between 2 RuvA tetramers; dsDNA enters through RuvA and exits via RuvB. An RuvB hexamer assembles on each DNA strand where it exits the tetramer. Each RuvB hexamer is contacted by two RuvA subunits (via domain III) on 2 adjacent RuvB subunits; this complex drives branch migration. In the full resolvosome a probable DNA-RuvA(4)-RuvB(12)-RuvC(2) complex forms which resolves the HJ.

It is found in the cytoplasm. In terms of biological role, the RuvA-RuvB-RuvC complex processes Holliday junction (HJ) DNA during genetic recombination and DNA repair, while the RuvA-RuvB complex plays an important role in the rescue of blocked DNA replication forks via replication fork reversal (RFR). RuvA specifically binds to HJ cruciform DNA, conferring on it an open structure. The RuvB hexamer acts as an ATP-dependent pump, pulling dsDNA into and through the RuvAB complex. HJ branch migration allows RuvC to scan DNA until it finds its consensus sequence, where it cleaves and resolves the cruciform DNA. The sequence is that of Holliday junction branch migration complex subunit RuvA from Acinetobacter baumannii (strain ACICU).